Here is a 205-residue protein sequence, read N- to C-terminus: ITG-like peptide (205 aa).

Positions 1–15 (MRVYAAITLVLVANT) are cleaved as a signal peptide. 2 propeptides span residues 16 to 188 (AYIG…TSGE) and 202 to 205 (MPFA).

Expressed throughout the nervous system (at protein level).

The protein resides in the secreted. The sequence is that of ITG-like peptide from Camponotus floridanus (Florida carpenter ant).